A 487-amino-acid chain; its full sequence is Chromosomal replication initiator protein DnaA (487 aa).

A domain I, interacts with DnaA modulators region spans residues 1–79; that stretch reads MEKSKNIWSL…GYNNIVIVFT (79 aa). Residues 79 to 142 are domain II; the sequence is TNQPPKTHSN…EEEPTNFKNP (64 aa). Residues 143 to 359 form a domain III, AAA+ region region; it reads FLKKRYTFEN…AAVTKLKAYI (217 aa). ATP-binding residues include Gly187, Gly189, Lys190, and Thr191. The tract at residues 360-487 is domain IV, binds dsDNA; sequence DLDNIEIDIE…TELMNKIKKN (128 aa).

This sequence belongs to the DnaA family. In terms of assembly, oligomerizes as a right-handed, spiral filament on DNA at oriC.

It is found in the cytoplasm. Plays an essential role in the initiation and regulation of chromosomal replication. ATP-DnaA binds to the origin of replication (oriC) to initiate formation of the DNA replication initiation complex once per cell cycle. Binds the DnaA box (a 9 base pair repeat at the origin) and separates the double-stranded (ds)DNA. Forms a right-handed helical filament on oriC DNA; dsDNA binds to the exterior of the filament while single-stranded (ss)DNA is stabiized in the filament's interior. The ATP-DnaA-oriC complex binds and stabilizes one strand of the AT-rich DNA unwinding element (DUE), permitting loading of DNA polymerase. After initiation quickly degrades to an ADP-DnaA complex that is not apt for DNA replication. Binds acidic phospholipids. The chain is Chromosomal replication initiator protein DnaA from Borreliella burgdorferi (strain ZS7) (Borrelia burgdorferi).